Reading from the N-terminus, the 7182-residue chain is MSFVAGVAPQGARGKYRAELNTEKRTDHVSLKASLCDAGDLVLKISPWFMDGESAYKHVSEQLSKGSKLLFVPQTLKGFIRHLPGPRVYLVERLTGGTYSDPFMVNQLAYQNAAGEGVIGTTLQGKRVGMFFPFDADLVTGEFQFLLRKKGFGGNRFRDAPWDYNWTPYSDLMDALEADPCGKYSQSLLKKLVGGDFTPIDQYMCGKNGKPIAEFAALMASEGITKLADVEAEVKSRTDSDRYIVFKNKLYRIVWNVQRKDVAYSKQSAFTMNSIVQLDTMEDVPRHSFTIGSEIQVIAPSTAVQANGHLNLKQRLLYAFYGKQAVSEPNYIYHSAYVDCTSCGKGSWLTGNAVQGFACDCGAHYCANDVDLQSSGLVRKNAVLLTTCPCNKDGECKHTLPQLVSMMTDKCDVEVVGKTFILTYGGVIYAYMGCSGGTMHFIPRAKSCVSKIGDAIFTGCTGTWSKVCETANLFLERAQHAINFVNEFVLTETVVALLSGTTSSIEELRDLCRNATFEKVRDYLTPRGWIVTMGSYIEGVINVGAAGVCNAALNAPFIVLSGLGESFKKVAATPWKLCSSLRETLDHYADSITYRVFPYDIPCDVTDYTALLLDCAVLTGASAYFVARYVDEKVEQLTNLVFSSCQSAVAAFVQACMSTYKATAKFISDMFTLIKVVSERLYVYTSVGFVVVGDYSSQLLKQFMHILSKAMQLLHTTVSWAGSKLPSVVYNGRDSLVFPSGTYYCVSTQGRSLQDQFDLVIPGDLSKKQIGILEPTPNSTTVDKKINTNVVEVVVGQLEPTKEHSPELVVGDYVIISNKIFVRSVEDSETVFYPLCTDGKIVPTLFRLKGGAPPKGVKFGGEQTKEITAVRSVSVDYDVHPVLDALLAGSELATFTVEKDLPVKDFVDVVKDEVIELLSKLLRGYNVDGFDLEDFADTPCYVYNAEGDLAWSSTMTFSVNPVEEVEEECDDDYVEDEYLSEEMLVEEDENSWAAAVEAVIPMEDVQLDTLVAEIDVSEPADDVAEQASTEEVEVPSACVLEASQVANAAEVESCEAEVSSSIPLHEDANAAKANDCAEGMPALDSTETVSKLSVDTPVGDVTQDDATSSNATVISEDVHTATHSKGLVAVPEVVPEKALGTSVERMRSTSEWTVVETSLKQETAVIVKNDSSAKPQRVKKPKAENPLKNFKHIVLNNDVTLVFGDAIAVARATEDCILVNAANTHLKHGGGIAAAIDRASGGLVQAESDDYVNFYGPLNVGDSTLLKGHGLATGILHVVGPDARANQDIQLLKRCYKAFNKYPLVVSPLISAGIFCVEPRVSLEYLLSVVHTKTYVVVNSEKVYNDLAAPKPPTGLTYSHEGWRGIIRNAKSFGFTCFICTDQSANAKLLKGRGVDLTKKTQTVDGVKYYLYSSKDPLTDIITAANACKGICAMPIGYVTHGLDLAQAGQQVKKITVPYVCLLASKDQVPILNSDVAVQTPEQSFINTVIANGGYHCWHLVTGELIVKGVSYRKLLNWSDQTICYADNKFYVVKGQIALPFDSLEKCRTYLTSRAAQQKNVDVLVTIDGVNFRTVVLNNTTTYRVQLGSVFYKGSDISDTIPTEKMSGEAVYLADNLSEAEKAVLSEVYGTADTAFLHRYYSLLALVKKWKYTVHDGVKSLKLNSNNCYVNVTMLMLDMLKEIKFIVPALQAAYLKHKGGDSTEFIALIMAYGDCTYGEPDDASRLLHTILSKAELTTQAKMVWRQWCNVCGVQDTTTTGLKACIYVGMNSLDELHATHEECCQCGDVRKRQLVEHNAPWLLLSGLNEAKVMTPTSQSAGPDYTAFNVFQGVETSVGHYLHVRVKDNLLYKYDSGSLSKTSDMKCKMTDVYYPKQRYSADCNVVVYSLDGNTWADVDPDLSAFYMKDGKYFTKKPVIEYSPATILSGSVYTNSCLVGHDGTIGSDAISSSFNNLLGFDNSKPVSKKLTYSFFPDFEGDVILTEYSTYDPIYKNGAMLHGKPILWVNNSKFDSALNKFNRATLRQVYDIAPVTLENKYTVLQDNQIQQVEVEAPKEDAKPQSPVQVAEDIDNKLPIIKCKGLKKPFVKDGYSFVNDPQGVNVIDTLGIDDLRALYVDRNLRLIVLKENNWSALFNIHTVEKGDLSVIAASGSITRRVKILLGASSLFAQFASVTVNVTTAMGKALGRMTRNVITNTGIIGQGFALLKMLLILPFTFWKSKNQSTVKVEVGALRTAGIVTTNVVKQCASAAYDVLVVKFKRIDWKSTLRLLFLICTTGLLLSSLYYLFLFHQVLTSDVMLDGAEGMLATYRELRSYLGIHSLCDGMVEAYRNVSYDVNDFCSNRSALCNWCLIGQDSLTRYSAFQMIQTHVTSYVINIDWVWFVMEFALAYVLYTSTFNVLLLVVSSQYFFSYTGAFVNWRSYNYLVSGYFFCVTHIPLLGLVRIYNFLACLWFLRRFYNHVINGCKDTACLLCYKRNRLTRVEASTVVCGSKRTFYIVANGGTSFCCRHNWNCVDCDTAGIGNTFICEEVANDLTTSLRRLVKPTDKSHYYVESVTVKDSVVQLHYSREGASCYERYPLCYFTNLDKLKFKEVCKTPTGIPEHNFLIYDSSDRGQENLARSACVYYSQVLSKPMLLVDSNMVTTVGDSREIASKMLDSYVNSFISLFGVNRDKLDKLVATARDCVKRGDDFQTVIKTFTDAARGPAGVESDVETSSIVDALQYAYKHDLQLTTEGFNNYVPSYIKPDSVATADLGCLIDLNAASVNQTSIRNANGACIWNSSDYMKLSDSLKRQIRIACRKCNIPFRLTTSRLRSADNILSVKFSATKLSGGAPKWLLKLRDFTWKSYCVVTLVVFAMAVLSYLCLPAFNMSQVSFHEDRILTYKVVENGIIRDITPSDTCFANKYQSFSKWFNEHYGGLFNNDISCPVTVAVIAGVAGARVPNLPANVAWVGRQIVLFVSRVFASSNNVCYTPTAEIPYERFSDSGCVLASECTLFRDAEGKINPYCYDPTVLPGASAYDQMKPHVRYDMYDSDMYIKFPEVVFESTLRITKTLATRYCRFGSCEDANEGVCITTNGSWAIYNDHYANKPGVYCGDNYFDIVRRLGLSLFQPVTYFQLSTSLALGVMLCIFLTIAFYYVNKVKRALADYTQCAVVAVAAALLNSLCLCFVVSNPLLVLPYTALYYYATFYLTGEPAFVMHVSWFVMFGTVVPIWMVFAYIVGVCLRHLLWVMAYFSKKHVEVFTDGKLNCSFQDAAANIFVINKDTYVALRNSITQDSYNRYLSMFNKYKYYSGAMDTASYREASAAHLCKALQVYSETGSDVLFQPPNCSVTSSVLQSGLVKMAAPSGVVENCMVQVTCGSMTLNGLWLDNYVWCPRHVMCPADQLSDPNYDALLVSKTNLSFIVQKNVGAPANLRVVGHTMVGTLLKLTVESANPQTPAYTFTTVKPGASFSVLACYNGRPTGVFMVNMRQNSTIKGSFLCGSCGSVGYTQEGNVINFCYMHQMELSNGTHTGCAFDGVMYGAFEDRQVHQVQLSDKYCTINIVAWLYAAILNGCNWFVKPNKTGIATFNEWAMSNQFTEFIGTQSVDMLAHKTGVSVEQLLYAIQTLHKGFQGKTILGNSMLEDEFTPDDVNMQVMGVVMQSGVKRISYGLVHWLFTTLLLAYVATLQLTKFTIWNYLFEVIPLQLTPLVLCVMACVMLTVKHKHTFLTLFLLPTAICLTYANIVYEPQTPVSSALIAVANWLNPASVYMRTTHTDLGVYLSLCFALAVVVRRLYRPNASNLALALGSAMVWFYTYTTGDCSSPLTYLMFLTTLTSDYTVTVFLAVNVAKFFARVVFLYAPHAGFIFPEVKLVLLMYLAVGYFCTVYFGVFSLLNLKLRVPLGVYDYTVSTQEFRYLTGNGLHAPRNSWEALRLNMKLIGIGGTPCIKIASVQSKLTDLKCTSVVLLSVLQQLHLEANSKAWAHCVKLHNDILAATDPTEAFDNFVCLFATLMSFSANVDLEALASDLLDHPSVLQATLSEFSHLASYAELEAAQSSYQKALNSGDASPQVLKALQKAVNIAKNAYEKDKAVARKLERMAEQAMTSMYKQARAEDKKAKIVSAMQTMLFGMIKKLDNDVLNGVISNARNGCVPLSVVPLCASNKLRVVIPDITIWNKVVTWPSLSYAGALWDISLINNVDGEVVKSSDVTETNESLTWPLVLECTRAASSAVTLQNNEIRPSGLKTMVVSAGIDHANCNTSSLAYYEPVEGRKMLMGILSENAHLKWAKVEGRDGFVNIELQPPCKFLIAGPKGPEVRYLYFVKNLNNLHRGQLLGHIAATVRLQAGSNTEFAINSSVLSAVTFSVDPGKAYLDFVNAGGAPLTNCVKMLTPKTGTGIAVSVKPEANADQDTYGGASVCLYCRAHIEHPDVTGVCKFKGKFVQVPLHIRDPVGFCLQNTPCNVCQFWIGHGCNCDALRGTTIPQSKDSNFLNRVRGSIVNARIEPCASGLTTDVVFRAFDICNYKAKVAGIGKYYKTNTCRFVEVDDEGHRLDSFFVVKRHTMENYELEKRCYDLVKDCDAVAVHDFFIFDVDKVKTPHIVRQRLTEYTMMDLVYALRHFDQNNCEVLKSILVKYGCCDASYFDNKLWFDFVENPNVISVYHKLGERIRQAVLNTVKFCDQMVKSGLVGVLTLDNQDLNGKWYDFGDFVITQPGAGVAIVDSYYSYLMPVLSMTNCLAAETHRDCDLTKPLIEWPLLEYDYTDYKIGLFEKYFKXWDQQYHPNCVNCTDDRCVLHCANFNVLFSMTLPGTSFGPIVRKIFVDGVPFVISCGYHYKELGLVMNMDVSLHRHRLSLKELMMYAADPAMHIASASALWDLRTPCFSVAALTTGLTFQTVRPGNFNKDFYDFVVSKGFFKEGSSVTLRHFFFAQDGHAAITDYSYYAYNLPTMCDIKQMLFCMEVVDRYFEIYDGGCLNASEVIVNNLDKSAGHPFNKFGKARVYYESLSYQEQDELFAMTKRNVLPTITQMNLKYAISAKNRARTVAGVSILSTMTNRQYHQKMLKSMAATRGSTCVIGTTKFYGGWDFMLKTLYKDVDNPHLMGWDYPKCDRAMPNMCRIFASLILARKHSTCCTNTDRFYRLANECAQVLSEYVLCGGGYYVKPGGTSSGDATTAYANSVFNILQATTANVSALMGANGNTIVDEEVKDMQFELYVNVYRKSQPDPKFVDRYYAFLNKHFSMMILSDDGVVCYNSDYATKGYIASIQNFKETLYYQNNVFMSEAKCWVETDLKKGPHEFCSQHTLFIKDGDDGYFLPYPDPSRILSAGCFVDDIVKTDGTLMVERFVSLAIDAYPLTKHDDPEYQNVFWVYLQYIEKLYKDLTGHMLDSYSVMLCGDNSAKFWEESFYRDLYTAPTTLQAVGSCVVCHSQTSLRCGTCIRRPFLCCKCCYDHVIATPHKMVLSVSPYVCNAPGCDVADVTKLYLGGMSYFCIDHRPVCSFPLCANGLVFGLYKNMCTGSPSVTEFNRLATCDWTESGDYTLANTTTEPLKLFAAETLRATEEASKQSYAIATIKEIVGERELLLVWEAGKAKPPLNRNYVFTGYHITKNSKVQLGEYVFERIDYSDAVSYKSSTTYKLAVGDIFVLTSHSVATLQAPTIVNQERYVKITGLYPTLTVPEEFANHVANFQKAGFSKFVTVQGPPGTGKSHFAIGLAIYYPTARVVYTACSHAAVDALCEKAFKYLNIAKCSRIIPAKARVECYDQFKVNETNSQYLFSTINALPETSADILVVDEVSMCTNYDLSVINARIKAKHIVYVGDPAQLPAPRTLLTRGTLEPENFNSVTRLMCNLGPDIFLSVCYRCPEEIVNTVSALVYNNKLVAKKPASGQCFKILYKGSVTHDASSAINRPQLNFVKSFIAANPNWSKAVFISPYNSQNAVARSVLGLTTQTVDSSQGSEYPYVIFCQTADTAHANNINRFNVAVTRAQKGILCVMTSQALFDSLEFAEVSLNNYKLQSQIVTGLYKDCSRESSGLHPAYAPTYVSVDDKYKTSDELCVNLNVPANVPYSRVISRMGFKLDASIPNYPKLFITRDEAIRQVRSWIGFDVEGAHASRNACGTNVPLQLGFSTGVNFVVQPVGVVDTEWGSMLTSIAARPPPGEQFKHLVPLMNKGAAWPIVRRRIVQMLSDTLDKLSDYCTFVCWAHGFELTSASYFCKIGKEQRCCMCNRRASTYSSPLHSYACWSHSSGYDYVYNPFFVDVQQWGYIGNLATNHDRYCSVHQGAHVASNDAVMTRCLAIHDCFIERVEWDITYPYISHEKRLNSCCRAVERNVVRAALLAGRFERVYDIGNPKGIPIVDDPVVDWHYYDAQPLSKKVQQLFYTEDCAKNFSDGLCLFWNCNVPRYPNNAIVCRFDTRVHSEFNLPGCDGGSLYVNKHAFHTPAYDASAFRDLKPLPFFYYSTTPCEVHGNGNMLEDIDYVPLKSAVCITACNLGGAVCRKHAAEYRDYMEAYNLVSASGFRLWCYKTFDVYNLWSTFTKIQGLENIAYNVIKQGHFTGVEGELPVAVVNDKIYTKSDVNDVCIFENKTTLPTNIAFELYAKRAVRSHPDFNLLRNLEVDVCYKFVLWDYERSNIYGSATIGVCKYTDIDVNSALNICFDIRDNGSLERFMSLPNGILISDRKVKNYPCIVSSNYAYFNGTLIRDNTGNSQSSDGEVKQPVTFYIYKKVNNEFVQFTDTYYTLGRTVSDFTPVSEMEKDFLALDSDVFIKKYKLEAYAFEHVVYGDFSRTTLGGLHLLIGLYKKHQEGHIIMEEMLKERATVHNYFVTESNTASFKAVCSVIDLKLDDFVDIIKAMDLSVVSKVVKIPIDLTMIEFMLWCKDGQVQTFYPRLQAINDWKPGLAMPSLFKVQNSNLEPCMLPNYKQSIPMPQGVHMNIAKYMQLCQYLNTCTIAVPANMRVMHFGAGSDKGVAPGSSVLRQWLPTDAILIDNDLNEYVSDADITLFGDCVTVRVGQQVDLLISDMYDPSTKVVGETNEAKALFFVYLCNFIKNNLALGGSVAIKITEHSWSAELYELMGRFAWWTVFCTNANASSSEGFLIGINYLGELKEVIDGNVMHANYIFWRNTTLMNLSTYSLFDLSRFPLKLKGTPVLQLKESQINELVISLLSQGKLIIRDNDTLSVSTDVLVNFYRKPHKRSKC.

A CoV Nsp1 globular domain is found at 25 to 151 (RTDHVSLKAS…EFQFLLRKKG (127 aa)). In terms of domain architecture, BetaCoV Nsp1 C-terminal spans 159 to 195 (DAPWDYNWTPYSDLMDALEADPCGKYSQSLLKKLVGG). The CoV Nsp2 N-terminal domain maps to 197–473 (FTPIDQYMCG…WSKVCETANL (277 aa)). Zn(2+)-binding residues include Cys-340, Cys-343, Cys-359, and Cys-361. A C4 region spans residues 340 to 361 (CTSCGKGSWLTGNAVQGFACDC). The CoV Nsp2 middle domain occupies 479–713 (QHAINFVNEF…MHILSKAMQL (235 aa)). Residues 715-851 (HTTVSWAGSK…VPTLFRLKGG (137 aa)) enclose the CoV Nsp2 C-terminal domain. The 110-residue stretch at 855-964 (KGVKFGGEQT…MTFSVNPVEE (110 aa)) folds into the Ubiquitin-like 1 domain. Macro domains lie at 1186-1345 (PLKN…KVYN) and 1354-1480 (TGLT…AVQT). The region spanning 1480 to 1553 (TPEQSFINTV…LEKCRTYLTS (74 aa)) is the DPUP domain. The Ubiquitin-like 2 domain maps to 1558 to 1613 (QKNVDVLVTIDGVNFRTVVLNNTTTYRVQLGSVFYKGSDISDTIPTEKMSGEAVYL). A Peptidase C16 domain is found at 1628 to 1902 (VYGTADTAFL…WADVDPDLSA (275 aa)). Catalysis depends on Cys-1668, which acts as the For PL-PRO activity. Cys-1748, Cys-1751, Cys-1783, and Cys-1785 together coordinate Zn(2+). A C4-type zinc finger spans residues 1748-1785 (CNVCGVQDTTTTGLKACIYVGMNSLDELHATHEECCQC). Active-site for PL-PRO activity residues include His-1838 and Asp-1853. One can recognise a Nucleic acid-binding domain in the interval 1916–2033 (VIEYSPATIL…QVYDIAPVTL (118 aa)). The 121-residue stretch at 2059-2179 (PQSPVQVAED…ASVTVNVTTA (121 aa)) folds into the G2M domain. Helical transmembrane passes span 2158 to 2178 (ILLG…NVTT), 2196 to 2216 (GIIG…FTFW), and 2268 to 2288 (LLFL…LFLF). The tract at residues 2158–2441 (ILLGASSLFA…VTHIPLLGLV (284 aa)) is HD1. Positions 2305–2371 (LATYRELRSY…FQMIQTHVTS (67 aa)) constitute a 3Ecto domain. 2 cysteine pairs are disulfide-bonded: Cys-2321–Cys-2349 and Cys-2339–Cys-2346. 3 consecutive transmembrane segments (helical) span residues 2372–2392 (YVIN…YVLY), 2396–2416 (FNVL…GAFV), and 2421–2441 (YNYL…LGLV). Residues 2455-2545 (RFYNHVINGC…SLRRLVKPTD (91 aa)) form a Y1 region. A CoV Nsp3 Y domain is found at 2455–2828 (RFYNHVINGC…LSVKFSATKL (374 aa)). The Zn(2+) site is built by His-2459, Cys-2464, Cys-2469, Cys-2472, Cys-2505, His-2508, Cys-2512, and Cys-2515. Positions 2459–2472 (HVINGCKDTACLLC) are ZF1. Residues 2505–2515 (CCRHNWNCVDC) are ZF2. Residues 2546 to 2644 (KSHYYVESVT…LVDSNMVTTV (99 aa)) are Y2. Residues 2546 to 2828 (KSHYYVESVT…LSVKFSATKL (283 aa)) are coV-Y. Residues 2645 to 2727 (GDSREIASKM…DALQYAYKHD (83 aa)) form a Y3 region. Positions 2728–2828 (LQLTTEGFNN…LSVKFSATKL (101 aa)) are Y4. 4 consecutive transmembrane segments (helical) span residues 2848-2868 (CVVT…LPAF), 3119-3139 (STSL…FYYV), 3152-3172 (CAVV…FVVS), and 3203-3223 (WFVM…IVGV). The tract at residues 2848 to 3223 (CVVTLVVFAM…WMVFAYIVGV (376 aa)) is HD2. The 97-residue stretch at 3242–3338 (VFTDGKLNCS…NCSVTSSVLQ (97 aa)) folds into the Nsp4C domain. The 306-residue stretch at 3339 to 3644 (SGLVKMAAPS…NMQVMGVVMQ (306 aa)) folds into the Peptidase C30 domain. Residues His-3379 and Cys-3486 each act as for 3CL-PRO activity in the active site. Transmembrane regions (helical) follow at residues 3650–3670 (ISYG…VATL), 3684–3704 (VIPL…MLTV), 3709–3729 (TFLT…NIVY), 3760–3777 (LGVY…VRRL), 3782–3802 (ASNL…YTTG), 3823–3843 (VTVF…FLYA), and 3855–3875 (LVLL…GVFS). Residues 3650–3875 (ISYGLVHWLF…FCTVYFGVFS (226 aa)) form an HD3 region. Positions 3937–4019 (SKLTDLKCTS…DLLDHPSVLQ (83 aa)) constitute a RdRp Nsp7 cofactor domain. The region spanning 4020-4218 (ATLSEFSHLA…RAASSAVTLQ (199 aa)) is the RdRp Nsp8 cofactor domain. The Nsp9 ssRNA-binding domain maps to 4219–4328 (NNEIRPSGLK…GHIAATVRLQ (110 aa)). An ExoN/MTase coactivator domain is found at 4329 to 4467 (AGSNTEFAIN…DALRGTTIPQ (139 aa)). 8 residues coordinate Zn(2+): Cys-4402, Cys-4405, His-4411, Cys-4418, Cys-4444, Cys-4447, Cys-4455, and Cys-4457. 2 zinc fingers span residues 4402 to 4418 (CLYC…TGVC) and 4444 to 4457 (CNVC…GCNC). The NiRAN domain maps to 4473–4730 (FLNRVRGSIV…AAETHRDCDL (258 aa)). 2 residues coordinate Mn(2+): Asn-4678 and Asp-4687. One can recognise a Nsp12 Interface domain in the interval 4735 to 4833 (IEWPLLEYDY…MNMDVSLHRH (99 aa)). Zn(2+) is bound by residues His-4764, Cys-4770, Cys-4775, Cys-4779, and Cys-4956. A Nsp12 RNA-dependent RNA polymerase domain is found at 4834 to 5401 (RLSLKELMMY…DLYTAPTTLQ (568 aa)). Positions 4836–5050 (SLKELMMYAA…HQKMLKSMAA (215 aa)) are rdRp Fingers N-ter. Residues 5051 to 5089 (TRGSTCVIGTTKFYGGWDFMLKTLYKDVDNPHLMGWDYP) form a rdRp Palm N-ter region. One can recognise a RdRp catalytic domain in the interval 5081-5243 (PHLMGWDYPK…CYNSDYATKG (163 aa)). Residues 5090–5148 (KCDRAMPNMCRIFASLILARKHSTCCTNTDRFYRLANECAQVLSEYVLCGGGYYVKPGG) are rdRp Fingers C-ter. Zn(2+) contacts are provided by His-5111, Cys-5114, and Cys-5115. Residues 5149–5284 (TSSGDATTAY…KKGPHEFCSQ (136 aa)) are rdRp Palm C-ter. Active-site residues include Ser-5228, Asp-5229, and Asp-5230. Residues 5285 to 5401 (HTLFIKDGDD…DLYTAPTTLQ (117 aa)) form a rdRp Thumb region. The CV ZBD domain maps to 5402-5514 (AVGSCVVCHS…TEFNRLATCD (113 aa)). Zn(2+)-binding residues include Cys-5406, Cys-5409, Cys-5417, Cys-5420, Cys-5427, Cys-5430, His-5434, His-5440, Cys-5451, Cys-5456, Cys-5473, and His-5476. Residues 5658-5839 (TVPEEFANHV…MCNLGPDIFL (182 aa)) enclose the (+)RNA virus helicase ATP-binding domain. ATP is bound at residue 5683–5690 (GPPGTGKS). The region spanning 5840–6014 (SVCYRCPEEI…GLYKDCSRES (175 aa)) is the (+)RNA virus helicase C-terminal domain. The ExoN domain maps to 6071 to 6286 (LFITRDEAIR…RCLAIHDCFI (216 aa)). Residues Asp-6089, Glu-6091, and Glu-6190 contribute to the active site. Residues Cys-6206, Cys-6209, Cys-6225, His-6228, His-6256, Cys-6260, and His-6263 each contribute to the Zn(2+) site. Catalysis depends on residues His-6267 and Asp-6272. Cys-6278 serves as a coordination point for Zn(2+). An N7-MTase domain is found at 6295 to 6523 (YPYISHEKRL…NLWSTFTKIQ (229 aa)). Residue 6330 to 6336 (DIGNPKG) coordinates S-adenosyl-L-methionine. The segment at 6409 to 6423 (CDGGSLYVNKHAFHT) is gpppA-binding. Zn(2+) contacts are provided by Cys-6447, Cys-6469, Cys-6480, and His-6483. In terms of domain architecture, Nsp15 N-terminal oligomerization spans 6524–6584 (GLENIAYNVI…NIAFELYAKR (61 aa)). Residues 6585–6715 (AVRSHPDFNL…IYKKVNNEFV (131 aa)) form the AV-Nsp11N/CoV-Nsp15M domain. The region spanning 6732–6871 (TPVSEMEKDF…KDGQVQTFYP (140 aa)) is the NendoU domain. Residues His-6762, His-6777, Lys-6817, Lys-6920, Asp-7004, Lys-7044, and Glu-7077 contribute to the active site. The Nidovirus-type SAM-dependent 2'-O-MTase domain maps to 6876–7170 (INDWKPGLAM…TLSVSTDVLV (295 aa)).

The protein belongs to the coronaviruses polyprotein 1ab family. In terms of assembly, interacts with host PHB and PHB2. Interacts with papain-like protease nsp3 and non-structural protein 6. As to quaternary structure, monomer. Homodimer. Only the homodimer shows catalytic activity. In terms of assembly, interacts with nsp8 and nsp12 to form the replication-transcription complex (RTC): nsp12, nsp7, two subunits of nsp8, and up to two subunits of nsp13. Interacts with nsp7, nsp13 and nsp12 to form the replication-transcription complex (RTC): nsp12, nsp7, two subunits of nsp8, and up to two subunits of nsp13. As to quaternary structure, interacts with nsp12. In terms of assembly, interacts with proofreading exoribonuclease nsp14 and 2'-O-methyltransferase nsp16; these interactions enhance nsp14 and nsp16 enzymatic activities. Interacts with nsp7 and nsp8 to form the replication-transcription complex (RTC): nsp12, nsp7, two subunits of nsp8, and up to two subunits of nsp13. Interacts with nsp9. As to quaternary structure, interacts with nsp8 to form the replication-transcription complex (RTC): nsp12, nsp7, two subunits of nsp8, and up to two subunits of nsp13. Mn(2+) serves as cofactor. Requires Mg(2+) as cofactor. Post-translationally, specific enzymatic cleavages in vivo by its own proteases yield mature proteins. 3CL-PRO and PL-PRO proteinases are autocatalytically processed.

The protein localises to the host membrane. The protein resides in the host cytoplasm. It is found in the host perinuclear region. It localises to the host endoplasmic reticulum-Golgi intermediate compartment. The catalysed reaction is RNA(n) + a ribonucleoside 5'-triphosphate = RNA(n+1) + diphosphate. The enzyme catalyses ATP + H2O = ADP + phosphate + H(+). It carries out the reaction Thiol-dependent hydrolysis of ester, thioester, amide, peptide and isopeptide bonds formed by the C-terminal Gly of ubiquitin (a 76-residue protein attached to proteins as an intracellular targeting signal).. It catalyses the reaction a 5'-end (N(7)-methyl 5'-triphosphoguanosine)-ribonucleoside in mRNA + S-adenosyl-L-methionine = a 5'-end (N(7)-methyl 5'-triphosphoguanosine)-(2'-O-methyl-ribonucleoside) in mRNA + S-adenosyl-L-homocysteine + H(+). The catalysed reaction is uridylyl-uridylyl-ribonucleotide-RNA = a 3'-end uridylyl-2',3'-cyclophospho-uridine-RNA + a 5'-end dephospho-ribonucleoside-RNA. The enzyme catalyses a 5'-end diphospho-ribonucleoside in mRNA + GTP + H(+) = a 5'-end (5'-triphosphoguanosine)-ribonucleoside in mRNA + diphosphate. It carries out the reaction a 5'-end (5'-triphosphoguanosine)-ribonucleoside in mRNA + S-adenosyl-L-methionine = a 5'-end (N(7)-methyl 5'-triphosphoguanosine)-ribonucleoside in mRNA + S-adenosyl-L-homocysteine. In terms of biological role, the replicase polyprotein of coronaviruses is a multifunctional protein: it contains the activities necessary for the transcription of negative stranded RNA, leader RNA, subgenomic mRNAs and progeny virion RNA as well as proteinases responsible for the cleavage of the polyprotein into functional products. Inhibits host translation by interacting with the 40S ribosomal subunit. The nsp1-40S ribosome complex further induces an endonucleolytic cleavage near the 5'UTR of host mRNAs, targeting them for degradation. Viral mRNAs are not susceptible to nsp1-mediated endonucleolytic RNA cleavage thanks to the presence of a 5'-end leader sequence and are therefore protected from degradation. By suppressing host gene expression, nsp1 facilitates efficient viral gene expression in infected cells and evasion from host immune response. Functionally, may play a role in the modulation of host cell survival signaling pathway by interacting with host PHB and PHB2. Indeed, these two proteins play a role in maintaining the functional integrity of the mitochondria and protecting cells from various stresses. Its function is as follows. Responsible for the cleavages located at the N-terminus of the replicase polyprotein. In addition, PL-PRO possesses a deubiquitinating/deISGylating activity and processes both 'Lys-48'- and 'Lys-63'-linked polyubiquitin chains from cellular substrates. Participates together with nsp4 in the assembly of virally-induced cytoplasmic double-membrane vesicles necessary for viral replication. Antagonizes innate immune induction of type I interferon by blocking the phosphorylation, dimerization and subsequent nuclear translocation of host IRF3. Also prevents host NF-kappa-B signaling. In terms of biological role, participates in the assembly of virally-induced cytoplasmic double-membrane vesicles necessary for viral replication. Cleaves the C-terminus of replicase polyprotein at 11 sites. Recognizes substrates containing the core sequence [ILMVF]-Q-|-[SGACN]. Also able to bind an ADP-ribose-1''-phosphate (ADRP). Functionally, plays a role in the initial induction of autophagosomes from host endoplasmic reticulum. Later, limits the expansion of these phagosomes that are no longer able to deliver viral components to lysosomes. Its function is as follows. Forms a hexadecamer with nsp8 (8 subunits of each) that may participate in viral replication by acting as a primase. Alternatively, may synthesize substantially longer products than oligonucleotide primers. In terms of biological role, forms a hexadecamer with nsp7 (8 subunits of each) that may participate in viral replication by acting as a primase. Alternatively, may synthesize substantially longer products than oligonucleotide primers. Forms a primer, NSP9-pU, which is utilized by the polymerase for the initiation of RNA chains. Interacts with ribosome signal recognition particle RNA (SRP). Together with NSP8, suppress protein integration into the cell membrane, thereby disrupting host immune defenses. Functionally, plays a pivotal role in viral transcription by stimulating both nsp14 3'-5' exoribonuclease and nsp16 2'-O-methyltransferase activities. Therefore plays an essential role in viral mRNAs cap methylation. Its function is as follows. RNA-directed RNA polymerase that catalyzes the transcription of viral genomic and subgenomic RNAs. Acts in complex with nsp7 and nsp8 to transcribe both the minus and positive strands of genomic RNA. The kinase-like NiRAN domain of NSP12 attaches one or more nucleotides to the amino terminus of NSP9, forming a covalent RNA-protein intermediate that serves as transcription/replication primer. Subgenomic RNAs (sgRNAs) are formed by discontinuous transcription: The polymerase has the ability to pause at transcription-regulating sequences (TRS) and jump to the leader TRS, resulting in a major deletion. This creates a series of subgenomic RNAs that are replicated, transcribed and translated. In addition, Nsp12 is a subunit of the viral RNA capping enzyme that catalyzes the RNA guanylyltransferase reaction for genomic and sub-genomic RNAs. Subsequently, the NiRAN domain transfers RNA to GDP, and forms the core cap structure GpppA-RNA. In terms of biological role, multi-functional protein with a zinc-binding domain in N-terminus displaying RNA and DNA duplex-unwinding activities with 5' to 3' polarity. Activity of helicase is dependent on magnesium. Plays a role in viral RNA synthesis through two distinct activities. The N7-guanine methyltransferase activity plays a role in the formation of the cap structure GpppA-RNA. The proofreading exoribonuclease reduces the sensitivity of the virus to RNA mutagens during replication. This activity acts on both ssRNA and dsRNA in a 3'-5' direction. Functionally, plays a role in viral transcription/replication and prevents the simultaneous activation of host cell dsRNA sensors, such as MDA5/IFIH1, OAS, and PKR. Acts by degrading the 5'-polyuridines generated during replication of the poly(A) region of viral genomic and subgenomic RNAs. Catalyzes a two-step reaction in which a 2'3'-cyclic phosphate (2'3'-cP) is first generated by 2'-O transesterification, which is then hydrolyzed to a 3'-phosphate (3'-P). If not degraded, poly(U) RNA would hybridize with poly(A) RNA tails and activate host dsRNA sensors. Its function is as follows. Methyltransferase that mediates mRNA cap 2'-O-ribose methylation to the 5'-cap structure of viral mRNAs. N7-methyl guanosine cap is a prerequisite for binding of nsp16. Therefore plays an essential role in viral mRNAs cap methylation which is essential to evade immune system. This is Replicase polyprotein 1ab (rep) from Pipistrellus abramus (Japanese pipistrelle).